A 343-amino-acid polypeptide reads, in one-letter code: Protein RecA (343 aa).

66 to 73 contacts ATP; the sequence is GPESSGKT.

The protein belongs to the RecA family.

It is found in the cytoplasm. Can catalyze the hydrolysis of ATP in the presence of single-stranded DNA, the ATP-dependent uptake of single-stranded DNA by duplex DNA, and the ATP-dependent hybridization of homologous single-stranded DNAs. It interacts with LexA causing its activation and leading to its autocatalytic cleavage. The protein is Protein RecA of Rickettsia canadensis (strain McKiel).